An 871-amino-acid polypeptide reads, in one-letter code: Alanine--tRNA ligase (871 aa).

Histidine 561, histidine 565, cysteine 665, and histidine 669 together coordinate Zn(2+).

The protein belongs to the class-II aminoacyl-tRNA synthetase family. Requires Zn(2+) as cofactor.

It localises to the cytoplasm. It carries out the reaction tRNA(Ala) + L-alanine + ATP = L-alanyl-tRNA(Ala) + AMP + diphosphate. Functionally, catalyzes the attachment of alanine to tRNA(Ala) in a two-step reaction: alanine is first activated by ATP to form Ala-AMP and then transferred to the acceptor end of tRNA(Ala). Also edits incorrectly charged Ser-tRNA(Ala) and Gly-tRNA(Ala) via its editing domain. The polypeptide is Alanine--tRNA ligase (Dehalococcoides mccartyi (strain ATCC BAA-2100 / JCM 16839 / KCTC 5957 / BAV1)).